A 283-amino-acid chain; its full sequence is Cytosolic Fe-S cluster assembly factor CFD1 (283 aa).

26 to 33 lines the ATP pocket; sequence GKGGVGKS. The [4Fe-4S] cluster site is built by Cys-202 and Cys-205.

This sequence belongs to the Mrp/NBP35 ATP-binding proteins family. NUBP2/CFD1 subfamily. In terms of assembly, heterotetramer of 2 NBP35 and 2 CFD1 chains. Requires [4Fe-4S] cluster as cofactor.

The protein resides in the cytoplasm. Functionally, component of the cytosolic iron-sulfur (Fe/S) protein assembly (CIA) machinery. Required for maturation of extramitochondrial Fe-S proteins. The NBP35-CFD1 heterotetramer forms a Fe-S scaffold complex, mediating the de novo assembly of an Fe-S cluster and its transfer to target apoproteins. Required for biogenesis and export of both ribosomal subunits, which may reflect a role in assembly of the Fe/S clusters in RLI1, a protein which performs rRNA processing and ribosome export. The polypeptide is Cytosolic Fe-S cluster assembly factor CFD1 (Kluyveromyces lactis (strain ATCC 8585 / CBS 2359 / DSM 70799 / NBRC 1267 / NRRL Y-1140 / WM37) (Yeast)).